The primary structure comprises 854 residues: ATP-dependent zinc metalloprotease FtsH (854 aa).

Residues 1–5 (MNRKT) lie on the Cytoplasmic side of the membrane. A helical transmembrane segment spans residues 6 to 26 (VFRNVLLVAVVLLVIYAFSYF). The Extracellular portion of the chain corresponds to 27–112 (SNDTRDFKTV…FNTTVTQESW (86 aa)). Residues 113 to 133 (LTSILLFVLPMIILFGIFFFV) form a helical membrane-spanning segment. The Cytoplasmic segment spans residues 134 to 854 (MNRMQGGGGR…ARWDGPDGSR (721 aa)). 207-214 (GPPGTGKT) is an ATP binding site. His-429 lines the Zn(2+) pocket. Glu-430 is a catalytic residue. Zn(2+) contacts are provided by His-433 and Asp-505. Positions 658-854 (AGAPNSGVPN…ARWDGPDGSR (197 aa)) are disordered. 2 stretches are compositionally biased toward low complexity: residues 661–692 (PNSG…AQPS) and 698–719 (APQQ…WSAP). The segment covering 720 to 730 (GWPPRENPSPT) has biased composition (pro residues). The segment covering 749-778 (NQSQGQYGQPQHGQPQPDQGQYGQPHPGQQ) has biased composition (low complexity). Residues 812–822 (GNPSGENQWQS) are compositionally biased toward polar residues. Over residues 825–834 (PEQPQTPPPH) the composition is skewed to pro residues.

The protein in the central section; belongs to the AAA ATPase family. This sequence in the C-terminal section; belongs to the peptidase M41 family. Homohexamer. The cofactor is Zn(2+).

Its subcellular location is the cell membrane. In terms of biological role, acts as a processive, ATP-dependent zinc metallopeptidase for both cytoplasmic and membrane proteins. Plays a role in the quality control of integral membrane proteins. The chain is ATP-dependent zinc metalloprotease FtsH from Rhodococcus erythropolis (strain PR4 / NBRC 100887).